The chain runs to 460 residues: UDP-N-acetylmuramoylalanine--D-glutamate ligase (460 aa).

123–129 contributes to the ATP binding site; sequence GTNGKTT.

The protein belongs to the MurCDEF family.

The protein resides in the cytoplasm. It catalyses the reaction UDP-N-acetyl-alpha-D-muramoyl-L-alanine + D-glutamate + ATP = UDP-N-acetyl-alpha-D-muramoyl-L-alanyl-D-glutamate + ADP + phosphate + H(+). Its pathway is cell wall biogenesis; peptidoglycan biosynthesis. In terms of biological role, cell wall formation. Catalyzes the addition of glutamate to the nucleotide precursor UDP-N-acetylmuramoyl-L-alanine (UMA). This Enterococcus hirae protein is UDP-N-acetylmuramoylalanine--D-glutamate ligase (murD).